The chain runs to 232 residues: Large ribosomal subunit protein uL1 (232 aa).

It belongs to the universal ribosomal protein uL1 family. Part of the 50S ribosomal subunit.

In terms of biological role, binds directly to 23S rRNA. The L1 stalk is quite mobile in the ribosome, and is involved in E site tRNA release. Its function is as follows. Protein L1 is also a translational repressor protein, it controls the translation of the L11 operon by binding to its mRNA. The polypeptide is Large ribosomal subunit protein uL1 (Dichelobacter nodosus (strain VCS1703A)).